The chain runs to 702 residues: Phosphatase and actin regulator 4 (702 aa).

Disordered stretches follow at residues 1-38 (MEDPFEEADQPATEPGMVMDSVEAGDTTPPTKRKSKFS), 82-194 (GVLL…SSGG), and 222-363 (NLSV…PFPA). One copy of the RPEL 1 repeat lies at 63 to 88 (EVLERKISMRKPREELVKRGVLLEDP). The span at 106-120 (GHTTPIGNARSSSPV) shows a compositional bias: polar residues. Residues serine 116, serine 118, serine 131, and serine 147 each carry the phosphoserine modification. A compositionally biased stretch (polar residues) spans 147-156 (STGSQPNSEA). Residues 163–173 (VPKPPLLPPKR) are compositionally biased toward pro residues. A compositionally biased stretch (low complexity) spans 233–250 (TLPAAPASTNTTATPSLT). Phosphoserine is present on residues serine 270 and serine 291. Positions 301–318 (PSTSVPTLESAAAITTKT) are enriched in polar residues. A phosphoserine mark is found at serine 342 and serine 344. Residues 342-362 (SPSPPLPTHIPPEPPRTPPFP) show a composition bias toward pro residues. Position 358 is a phosphothreonine (threonine 358). Serine 427 carries the phosphoserine modification. Phosphothreonine is present on threonine 432. Phosphoserine is present on residues serine 443, serine 453, and serine 464. Positions 473–536 (KVPDDEEEEE…EEDEDESYQS (64 aa)) are disordered. Over residues 486–497 (PSTFSEETTPTS) the composition is skewed to low complexity. A compositionally biased stretch (acidic residues) spans 508-518 (EEEEKESDSDS). 4 positions are modified to phosphoserine: serine 514, serine 516, serine 557, and serine 590. RPEL repeat units follow at residues 583-608 (NTLIRRLSQRPTPEELEQRNILQPKN) and 621-646 (RRLTRKLSQRPTVAELLARKILRFNE). The segment at 592–615 (RPTPEELEQRNILQPKNEADRQAE) is disordered. Serine 628 carries the post-translational modification Phosphoserine.

The protein belongs to the phosphatase and actin regulator family. Binds PPP1CA and actin.

The protein localises to the cytoplasm. It is found in the cell projection. Its subcellular location is the lamellipodium. Its function is as follows. Regulator of protein phosphatase 1 (PP1) required for neural tube and optic fissure closure, and enteric neural crest cell (ENCCs) migration during development. Acts as an activator of PP1 by interacting with PPP1CA and preventing phosphorylation of PPP1CA at 'Thr-320'. During neural tube closure, localizes to the ventral neural tube and activates PP1, leading to down-regulate cell proliferation within cranial neural tissue and the neural retina. Also acts as a regulator of migration of enteric neural crest cells (ENCCs) by activating PP1, leading to dephosphorylation and subsequent activation of cofilin (COF1 or COF2) and repression of the integrin signaling through the RHO/ROCK pathway. This is Phosphatase and actin regulator 4 (PHACTR4) from Pongo abelii (Sumatran orangutan).